Consider the following 83-residue polypeptide: Hainantoxin-III 5 (83 aa).

The first 21 residues, 1-21, serve as a signal peptide directing secretion; sequence MKASRFLALAGLVLLFVVGYA. Positions 22-48 are excised as a propeptide; it reads SESEEKEFPRELLSKIFAVDDFKGEER. Intrachain disulfides connect Cys-50–Cys-65, Cys-57–Cys-70, and Cys-64–Cys-77. Leu-81 is subject to Leucine amide.

The protein belongs to the neurotoxin 10 (Hwtx-1) family. 15 (Hntx-3) subfamily. As to quaternary structure, monomer. Expressed by the venom gland.

The protein resides in the secreted. Its function is as follows. Selective antagonist of neuronal tetrodotoxin (TTX)-sensitive voltage-gated sodium channels (IC(50)=1270 nM on Nav1.1/SCN1A, 270 nM on Nav1.2/SCN2A, 491 nM on Nav1.3/SCN3A and 232 nM on Nav1.7/SCN9A). This toxin suppress Nav1.7 current amplitude without significantly altering the activation, inactivation, and repriming kinetics. Short extreme depolarizations partially activate the toxin-bound channel, indicating voltage-dependent inhibition of this toxin. This toxin increases the deactivation of the Nav1.7 current after extreme depolarizations. The toxin-Nav1.7 complex is gradually dissociated upon prolonged strong depolarizations in a voltage-dependent manner, and the unbound toxin rebinds to Nav1.7 after a long repolarization. Moreover, analysis of chimeric channels showed that the DIIS3-S4 linker is critical for toxin binding to Nav1.7. These data are consistent with this toxin interacting with Nav1.7 site 4 and trapping the domain II voltage sensor in the closed state. This Cyriopagopus hainanus (Chinese bird spider) protein is Hainantoxin-III 5.